A 315-amino-acid polypeptide reads, in one-letter code: 4-hydroxy-3-methylbut-2-enyl diphosphate reductase (315 aa).

Cysteine 12 is a binding site for [4Fe-4S] cluster. 2 residues coordinate (2E)-4-hydroxy-3-methylbut-2-enyl diphosphate: histidine 43 and histidine 81. Dimethylallyl diphosphate-binding residues include histidine 43 and histidine 81. Isopentenyl diphosphate-binding residues include histidine 43 and histidine 81. Residue cysteine 103 participates in [4Fe-4S] cluster binding. Histidine 131 provides a ligand contact to (2E)-4-hydroxy-3-methylbut-2-enyl diphosphate. Histidine 131 lines the dimethylallyl diphosphate pocket. Histidine 131 lines the isopentenyl diphosphate pocket. Glutamate 133 (proton donor) is an active-site residue. Threonine 170 is a binding site for (2E)-4-hydroxy-3-methylbut-2-enyl diphosphate. Residue cysteine 198 participates in [4Fe-4S] cluster binding. Positions 226, 228, and 271 each coordinate (2E)-4-hydroxy-3-methylbut-2-enyl diphosphate. 3 residues coordinate dimethylallyl diphosphate: serine 226, asparagine 228, and serine 271. Residues serine 226, asparagine 228, and serine 271 each contribute to the isopentenyl diphosphate site.

Belongs to the IspH family. Requires [4Fe-4S] cluster as cofactor.

The enzyme catalyses isopentenyl diphosphate + 2 oxidized [2Fe-2S]-[ferredoxin] + H2O = (2E)-4-hydroxy-3-methylbut-2-enyl diphosphate + 2 reduced [2Fe-2S]-[ferredoxin] + 2 H(+). It carries out the reaction dimethylallyl diphosphate + 2 oxidized [2Fe-2S]-[ferredoxin] + H2O = (2E)-4-hydroxy-3-methylbut-2-enyl diphosphate + 2 reduced [2Fe-2S]-[ferredoxin] + 2 H(+). It participates in isoprenoid biosynthesis; dimethylallyl diphosphate biosynthesis; dimethylallyl diphosphate from (2E)-4-hydroxy-3-methylbutenyl diphosphate: step 1/1. It functions in the pathway isoprenoid biosynthesis; isopentenyl diphosphate biosynthesis via DXP pathway; isopentenyl diphosphate from 1-deoxy-D-xylulose 5-phosphate: step 6/6. Its function is as follows. Catalyzes the conversion of 1-hydroxy-2-methyl-2-(E)-butenyl 4-diphosphate (HMBPP) into a mixture of isopentenyl diphosphate (IPP) and dimethylallyl diphosphate (DMAPP). Acts in the terminal step of the DOXP/MEP pathway for isoprenoid precursor biosynthesis. The protein is 4-hydroxy-3-methylbut-2-enyl diphosphate reductase of Anoxybacillus flavithermus (strain DSM 21510 / WK1).